The following is a 345-amino-acid chain: MTDKTSLSYKDAGVDIDAGNALVGRIKGVVKKTRRPEVMGGLGGFGALCALPQKYREPVLVSGTDGVGTKLRLAMDLKRHDTIGIDLVAMCVNDLVVQGAEPLFFLDYYATGKLDVDTASAVISGIAEGCLQSGCSLVGGETAEMPGMYHGEDYDVAGFCVGVVEKSEIIDGSKVSDGDVLIALGSSGPHSNGYSLVRKILEVSGCDPQTTELDGKPLADHLLAPTRIYVKSVLELIEKVDVHAIAHLTGGGFWENIPRVLPDNTRAVIDESSWQWPEVFNWLQTAGNVERHEMYRTFNCGVGMIIALPAPEVDKALALLNANGENAWKIGIIKASDSEQRVVIE.

The protein belongs to the AIR synthase family.

The protein localises to the cytoplasm. It carries out the reaction 2-formamido-N(1)-(5-O-phospho-beta-D-ribosyl)acetamidine + ATP = 5-amino-1-(5-phospho-beta-D-ribosyl)imidazole + ADP + phosphate + H(+). It functions in the pathway purine metabolism; IMP biosynthesis via de novo pathway; 5-amino-1-(5-phospho-D-ribosyl)imidazole from N(2)-formyl-N(1)-(5-phospho-D-ribosyl)glycinamide: step 2/2. This chain is Phosphoribosylformylglycinamidine cyclo-ligase, found in Escherichia coli O127:H6 (strain E2348/69 / EPEC).